Consider the following 189-residue polypeptide: Putative manganese efflux pump MntP (189 aa).

The next 6 helical transmembrane spans lie at 3-23 (PISL…AALG), 41-61 (LIFG…GQVA), 69-89 (DHWI…YNGI), 105-125 (FWIL…VGVG), 133-153 (IVIA…IGVM), and 168-188 (IVGG…HLSA).

This sequence belongs to the MntP (TC 9.B.29) family.

The protein localises to the cell inner membrane. Probably functions as a manganese efflux pump. The chain is Putative manganese efflux pump MntP from Pseudomonas savastanoi pv. phaseolicola (strain 1448A / Race 6) (Pseudomonas syringae pv. phaseolicola (strain 1448A / Race 6)).